The primary structure comprises 203 residues: Thymidine kinase (203 aa).

Residues 9–16 (ATMNAGKT) and 87–90 (DEAQ) each bind ATP. Residue E88 is the Proton acceptor of the active site. Residues C145, C147, C181, and H184 each coordinate Zn(2+).

The protein belongs to the thymidine kinase family. In terms of assembly, homotetramer.

It is found in the cytoplasm. The enzyme catalyses thymidine + ATP = dTMP + ADP + H(+). This chain is Thymidine kinase, found in Mesorhizobium japonicum (strain LMG 29417 / CECT 9101 / MAFF 303099) (Mesorhizobium loti (strain MAFF 303099)).